A 179-amino-acid chain; its full sequence is Translationally-controlled tumor protein homolog (179 aa).

The 179-residue stretch at 1-179 (MIIYKDIISG…WKHGLEEMKV (179 aa)) folds into the TCTP domain.

Belongs to the TCTP family.

The protein localises to the cytoplasm. Its subcellular location is the cytoskeleton. Functionally, involved in protein synthesis. Involved in microtubule stabilization. This is Translationally-controlled tumor protein homolog from Aspergillus fumigatus (strain ATCC MYA-4609 / CBS 101355 / FGSC A1100 / Af293) (Neosartorya fumigata).